The following is a 124-amino-acid chain: Orexigenic neuropeptide QRFP (124 aa).

An N-terminal signal peptide occupies residues 1-17 (MRCLCSWLCLLLPLSAC). Positions 18 to 79 (FPLLDRRGPT…REHTGFRLGR (62 aa)) are excised as a propeptide. Positions 63–100 (KEQQASRREHTGFRLGRQDSGSEATGFLPTDSEKASGP) are disordered. At glutamine 80 the chain carries Pyrrolidone carboxylic acid. At phenylalanine 122 the chain carries Phenylalanine amide.

Belongs to the RFamide neuropeptide family. In terms of assembly, ligand for the G-protein coupled receptor QRFPR/GPR103. As to expression, expressed in the brain with highest expression levels in the hypothalamus and optic nerve. Also expressed in the trachea and mammary gland.

The protein localises to the secreted. Its function is as follows. Stimulates feeding and grooming behavior, metabolic rate and locomotor activity and increases blood pressure. May have orexigenic activity. May promote aldosterone secretion by the adrenal gland. This chain is Orexigenic neuropeptide QRFP (Qrfp), found in Rattus norvegicus (Rat).